The sequence spans 117 residues: Large ribosomal subunit protein bL17 (117 aa).

It belongs to the bacterial ribosomal protein bL17 family. In terms of assembly, part of the 50S ribosomal subunit. Contacts protein L32.

The sequence is that of Large ribosomal subunit protein bL17 from Endomicrobium trichonymphae.